Here is a 334-residue protein sequence, read N- to C-terminus: ELMO domain-containing protein 1 (334 aa).

In terms of domain architecture, ELMO spans 133 to 314 (QHEEMLLKLW…KFRKRIIKQL (182 aa)).

Functionally, acts as a GTPase-activating protein (GAP) toward guanine nucleotide exchange factors like ARL2, ARL3, ARF1 and ARF6, but not for GTPases outside the Arf family. This Homo sapiens (Human) protein is ELMO domain-containing protein 1 (ELMOD1).